A 38-amino-acid chain; its full sequence is uncharacterized protein (38 aa).

This is an uncharacterized protein from Treponema pallidum (strain Nichols).